Consider the following 284-residue polypeptide: Shikimate kinase (284 aa).

An ATP-binding site is contributed by 85–95 (PLAAGLKSSSA).

Belongs to the GHMP kinase family. Archaeal shikimate kinase subfamily.

It localises to the cytoplasm. It carries out the reaction shikimate + ATP = 3-phosphoshikimate + ADP + H(+). It functions in the pathway metabolic intermediate biosynthesis; chorismate biosynthesis; chorismate from D-erythrose 4-phosphate and phosphoenolpyruvate: step 5/7. This Halobacterium salinarum (strain ATCC 29341 / DSM 671 / R1) protein is Shikimate kinase.